A 213-amino-acid chain; its full sequence is tRNA (guanine-N(7)-)-methyltransferase (213 aa).

Residues glutamate 44, glutamate 69, aspartate 96, and aspartate 118 each coordinate S-adenosyl-L-methionine. Aspartate 118 is a catalytic residue. Substrate contacts are provided by residues lysine 122, aspartate 154, and 191-194 (TEYE).

Belongs to the class I-like SAM-binding methyltransferase superfamily. TrmB family.

It catalyses the reaction guanosine(46) in tRNA + S-adenosyl-L-methionine = N(7)-methylguanosine(46) in tRNA + S-adenosyl-L-homocysteine. It functions in the pathway tRNA modification; N(7)-methylguanine-tRNA biosynthesis. Functionally, catalyzes the formation of N(7)-methylguanine at position 46 (m7G46) in tRNA. The protein is tRNA (guanine-N(7)-)-methyltransferase of Exiguobacterium sibiricum (strain DSM 17290 / CCUG 55495 / CIP 109462 / JCM 13490 / 255-15).